Here is a 586-residue protein sequence, read N- to C-terminus: Anaerobic glycerol-3-phosphate dehydrogenase subunit A1 (586 aa).

Position 6-34 (6-34 (SVLVIGGGSTGTGIARDLAMRGLDVTLVE)) interacts with FAD. Positions 559-586 (GGAVADGGRERAADRADDDALGGADGDN) are disordered. Residues 574-586 (ADDDALGGADGDN) show a composition bias toward acidic residues.

Belongs to the FAD-dependent glycerol-3-phosphate dehydrogenase family. As to quaternary structure, composed of a catalytic GlpA/B dimer and of membrane bound GlpC. The cofactor is FAD. FMN serves as cofactor.

The protein resides in the cell membrane. It catalyses the reaction a quinone + sn-glycerol 3-phosphate = dihydroxyacetone phosphate + a quinol. Its pathway is polyol metabolism; glycerol degradation via glycerol kinase pathway; glycerone phosphate from sn-glycerol 3-phosphate (anaerobic route): step 1/1. Its activity is regulated as follows. Up-regulated by glycerol and no inhibition by glucose. Functionally, conversion of glycerol 3-phosphate to dihydroxyacetone phosphate. Required for growth on glycerol and for glycerol metabolism. This chain is Anaerobic glycerol-3-phosphate dehydrogenase subunit A1 (gpdA1), found in Haloferax volcanii (strain ATCC 29605 / DSM 3757 / JCM 8879 / NBRC 14742 / NCIMB 2012 / VKM B-1768 / DS2) (Halobacterium volcanii).